Here is a 216-residue protein sequence, read N- to C-terminus: Cytidylate kinase (216 aa).

10–18 lines the ATP pocket; it reads GPAAAGKST.

Belongs to the cytidylate kinase family. Type 1 subfamily.

It is found in the cytoplasm. It catalyses the reaction CMP + ATP = CDP + ADP. The catalysed reaction is dCMP + ATP = dCDP + ADP. In Macrococcus caseolyticus (strain JCSC5402) (Macrococcoides caseolyticum), this protein is Cytidylate kinase.